Reading from the N-terminus, the 424-residue chain is D-inositol 3-phosphate glycosyltransferase (424 aa).

Histidine 9 contributes to the 1D-myo-inositol 3-phosphate binding site. UDP-N-acetyl-alpha-D-glucosamine is bound by residues glutamine 15–proline 16 and glycine 23. 1D-myo-inositol 3-phosphate-binding positions include aspartate 20–asparagine 25, lysine 78, tyrosine 110, threonine 134, and arginine 154. Residues arginine 231, lysine 236, and arginine 294 each contribute to the UDP-N-acetyl-alpha-D-glucosamine site. Mg(2+) contacts are provided by tyrosine 303, arginine 304, and alanine 306. The UDP-N-acetyl-alpha-D-glucosamine site is built by glutamate 316 and glutamate 324. Threonine 330 contacts Mg(2+).

It belongs to the glycosyltransferase group 1 family. MshA subfamily. As to quaternary structure, homodimer.

The catalysed reaction is 1D-myo-inositol 3-phosphate + UDP-N-acetyl-alpha-D-glucosamine = 1D-myo-inositol 2-acetamido-2-deoxy-alpha-D-glucopyranoside 3-phosphate + UDP + H(+). In terms of biological role, catalyzes the transfer of a N-acetyl-glucosamine moiety to 1D-myo-inositol 3-phosphate to produce 1D-myo-inositol 2-acetamido-2-deoxy-glucopyranoside 3-phosphate in the mycothiol biosynthesis pathway. This is D-inositol 3-phosphate glycosyltransferase from Corynebacterium efficiens (strain DSM 44549 / YS-314 / AJ 12310 / JCM 11189 / NBRC 100395).